A 352-amino-acid chain; its full sequence is Beta-methylmalyl-CoA dehydratase (352 aa).

In terms of domain architecture, MaoC-like spans 16-129 (LGQTIVHATP…GKTGVVYVHS (114 aa)). Substrate contacts are provided by residues 62 to 65 (PIDS), 85 to 88 (IANL), and 96 to 98 (GAV).

Homodimer.

It carries out the reaction (2R,3S)-beta-methylmalyl-CoA = 2-methylfumaryl-CoA + H2O. In terms of biological role, involved in the glyoxylate assimilation cycle used to regenerate acetyl-CoA and produce pyruvate as universal precursor for biosynthesis. Catalyzes the reversible dehydration of beta-methylmalyl-CoA ((2R,3S)-beta-methylmalyl-CoA) to yield mesaconyl-CoA (2-methylfumaryl-CoA). This is Beta-methylmalyl-CoA dehydratase (mch) from Chloroflexus aurantiacus (strain ATCC 29366 / DSM 635 / J-10-fl).